Here is a 1177-residue protein sequence, read N- to C-terminus: Transcription-repair-coupling factor (1177 aa).

The 162-residue stretch at 638-799 (DMERERPMDR…MLGVRDLSVI (162 aa)) folds into the Helicase ATP-binding domain. 651 to 658 (GDVGYGKT) contacts ATP. The short motif at 752-755 (DEEQ) is the DEEQ box element. Positions 820-974 (LVREAIEREL…GFKIAMRDLT (155 aa)) constitute a Helicase C-terminal domain.

In the N-terminal section; belongs to the UvrB family. The protein in the C-terminal section; belongs to the helicase family. RecG subfamily.

The protein resides in the cytoplasm. Couples transcription and DNA repair by recognizing RNA polymerase (RNAP) stalled at DNA lesions. Mediates ATP-dependent release of RNAP and its truncated transcript from the DNA, and recruitment of nucleotide excision repair machinery to the damaged site. Probably required to repair non-bulky DNA lesions. In Bacillus subtilis (strain 168), this protein is Transcription-repair-coupling factor.